The chain runs to 483 residues: Probable cytochrome P450 517A1 (483 aa).

Residues 1 to 21 (MEIINVFLFLIILFLVKDFVK) form a helical membrane-spanning segment. Heme is bound at residue cysteine 429.

It belongs to the cytochrome P450 family. It depends on heme as a cofactor.

Its subcellular location is the membrane. This is Probable cytochrome P450 517A1 (cyp517A1) from Dictyostelium discoideum (Social amoeba).